Reading from the N-terminus, the 107-residue chain is Cytochrome c2 (107 aa).

Glutamine 1 is modified (pyrrolidone carboxylic acid). Heme c contacts are provided by cysteine 13, cysteine 16, histidine 17, and methionine 79.

Belongs to the cytochrome c family. In terms of processing, binds 1 heme c group covalently per subunit.

The protein resides in the periplasm. Its function is as follows. Cytochrome c2 is found mainly in purple, non-sulfur, photosynthetic bacteria where it functions as the electron donor to the oxidized bacteriochlorophyll in the photophosphorylation pathway. However, it may also have a role in the respiratory chain and is found in some non-photosynthetic bacteria. This chain is Cytochrome c2, found in Rhodoplanes tepidamans (Rhodoplanes cryptolactis).